Reading from the N-terminus, the 573-residue chain is Oxygen sensor histidine kinase response regulator DosT (573 aa).

GAF domains follow at residues 61 to 198 (KLDA…GIAV) and 229 to 366 (DPAM…ALAW). Residue histidine 147 coordinates heme. The Histidine kinase domain maps to 380-573 (ILTDRDRIAR…TLLRWSAPLR (194 aa)). Position 392 is a phosphohistidine; by autocatalysis (histidine 392).

It depends on Mg(2+) as a cofactor. The cofactor is heme.

Its subcellular location is the cytoplasm. Functionally, interacts with the two-component regulatory system DevR/DevS (DosR/DosS) involved in onset of the dormancy response. Required for full induction of the DevR (DosR) regulon; required during early adaptation to anaerobiosis, to start induction of the DevR regulon. May act as a direct hypoxia/oxygen sensor. May be the secondary sensor for CO. Donates a phosphate group to DevR (DosR). The protein is Oxygen sensor histidine kinase response regulator DosT (dosT) of Mycobacterium tuberculosis (strain CDC 1551 / Oshkosh).